The chain runs to 147 residues: Microtubule-associated protein 1 light chain 3 gamma (147 aa).

Residues serine 93 and serine 96 each carry the phosphoserine; by TBK1 modification. Residue glycine 126 is the site of Phosphatidylethanolamine amidated glycine; alternate attachment. A lipid anchor (Phosphatidylserine amidated glycine; alternate) is attached at glycine 126. Positions 127-147 (CLESAAPRDGSSLEDRPCNPL) are cleaved as a propeptide — removed in mature form.

The protein belongs to the ATG8 family. As to quaternary structure, 3 different light chains, LC1 (a cleavage product of MAP1B), LC2 (a cleavage product of MAP1A) and LC3 (produced by one of the MAP1LC3 genes), can associate with the MAP1A or MAP1B heavy chains. Interacts with TP53INP1 and TP53INP2. Interacts with CALCOCO2. Interacts with TECPR2. Interacts with TBC1D5. Found in a complex with UBQLN1 and UBQLN2. Interacts with UBQLN4 (via STI1 1 and 2 domains). Interacts with UBQLN1 in the presence of UBQLN4. Interacts with TRIM5. Interacts with ATG13. Interacts with MEFV and TRIM21. Interacts with WDR81; recruits MAP1LC3C to ubiquitinated protein aggregates in the aggrephagy process. Interacts with MOAP1 (via LIR motif). Interacts with reticulophagy regulators RETREG1, RETREG2 and RETREG3. Interacts with TAX1BP1. Interacts with IRGM. Interacts with SPART. In terms of processing, the precursor molecule is cleaved by ATG4 (ATG4A, ATG4B, ATG4C or ATG4D) to expose the glycine at the C-terminus and form the cytosolic form, LC3-I. The processed form is then activated by APG7L/ATG7, transferred to ATG3 and conjugated to phosphatidylethanolamine (PE) phospholipid to form the membrane-bound form, LC3-II. During non-canonical autophagy, the processed form is conjugated to phosphatidylserine (PS) phospholipid. ATG4 proteins also mediate the delipidation of PE-conjugated forms. In addition, ATG4B and ATG4D mediate delipidation of ATG8 proteins conjugated to PS during non-canonical autophagy. Post-translationally, (Microbial infection) The Legionella effector RavZ is a deconjugating enzyme that hydrolyzes the amide bond between the C-terminal glycine residue and an adjacent aromatic residue in ATG8 proteins conjugated to phosphatidylethanolamine (PE), producing an ATG8 protein that is resistant to reconjugation by the host machinery due to the cleavage of the reactive C-terminal glycine. RavZ is also able to mediate delipidation of ATG8 proteins conjugated to phosphatidylserine (PS). Phosphorylation at Ser-96 and Ser-98 by TBK1 prevents interaction with ATG4 (ATG4A, ATG4B, ATG4C or ATG4D). Phosphorylation by TBK1 on autophagosomes prevents their delipidation by ATG4 and premature removal from nascent autophagosomes. Most abundant in placenta, lung and ovary.

The protein resides in the cytoplasmic vesicle. The protein localises to the autophagosome membrane. It localises to the endomembrane system. Its subcellular location is the cytoplasm. It is found in the cytoskeleton. Its function is as follows. Ubiquitin-like modifier that plays a crucial role in antibacterial autophagy (xenophagy) through the selective binding of CALCOCO2. Recruits all ATG8 family members to infecting bacteria such as S.typhimurium. May also play a role in aggrephagy, the macroautophagic degradation of ubiquitinated and aggregated proteins. The chain is Microtubule-associated protein 1 light chain 3 gamma (MAP1LC3C) from Homo sapiens (Human).